Reading from the N-terminus, the 167-residue chain is UTP pyrophosphatase (167 aa).

The catalysed reaction is UTP + H2O = UMP + diphosphate + H(+). Specifically catalyzes the hydrolysis of UTP to UMP and diphosphate in vitro, albeit at apparently slow rate. Shows no activity towards ATP, GTP, CTP, dTTP and ITP as substrates. The polypeptide is UTP pyrophosphatase (Escherichia coli (strain K12)).